The sequence spans 534 residues: Zona pellucida sperm-binding protein 4 (534 aa).

The N-terminal stretch at 1–17 (MWLLLQLVWLCFLLSLG) is a signal peptide. At 18–509 (LNSWHQSKVP…SRSPVDSQAL (492 aa)) the chain is on the extracellular side. Asn-71 carries N-linked (GlcNAc...) asparagine glycosylation. The P-type domain maps to 141–183 (GLCDSVPVWDRLPCAPSPITQGDCKQLGCCYNSEEVISCYYGN). The 278-residue stretch at 188 to 465 (HCTQDGHFSI…TLCPARRRRS (278 aa)) folds into the ZP domain. 2 N-linked (GlcNAc...) asparagine glycosylation sites follow: Asn-202 and Asn-219. O-linked (GalNAc...) serine glycosylation occurs at Ser-292. Residue Thr-302 is glycosylated (O-linked (GalNAc...) threonine). N-linked (GlcNAc...) asparagine glycosylation occurs at Asn-314. Cys-367 and Cys-441 form a disulfide bridge. Residues 462–534 (RRRSSDIHFQ…MSYLAIRKWR (73 aa)) constitute a propeptide, removed in mature form. An N-linked (GlcNAc...) asparagine glycan is attached at Asn-472. Residues 510-530 (WVAGLSGILIVGALFMSYLAI) traverse the membrane as a helical segment. Residues 531 to 534 (RKWR) are Cytoplasmic-facing.

This sequence belongs to the ZP domain family. ZPB subfamily. In terms of processing, proteolytically cleaved before the transmembrane segment to yield the secreted ectodomain incorporated in the zona pellucida. The N-terminus is blocked. Post-translationally, contains disulfide bond(s). Expressed in oocytes.

Its subcellular location is the zona pellucida. The protein localises to the cell membrane. In terms of biological role, component of the zona pellucida, an extracellular matrix surrounding oocytes which mediates sperm binding, induction of the acrosome reaction and prevents post-fertilization polyspermy. The zona pellucida is composed of 3 to 4 glycoproteins, ZP1, ZP2, ZP3, and ZP4. ZP4 may act as a sperm receptor. This Bos taurus (Bovine) protein is Zona pellucida sperm-binding protein 4 (ZP4).